Consider the following 165-residue polypeptide: Sporulation-specific cell division protein SsgB (165 aa).

The disordered stretch occupies residues 1-21 (MLVGNSWTRSLEPVSGHEHTE).

This sequence belongs to the SsgA family. As to quaternary structure, interacts with SsgA. Interacts with FtsZ (via N-terminus).

It localises to the cell septum. Involved in sporulation-specific cell division. Required for early stages of sporulation. Important in the process of growth cessation prior to sporulation-specific cell division. Recruits cell division protein FtsZ to the future septum sites and tethers the contractile ring structure (Z ring) to the cytoplasmic membrane during sporulation. Stimulates polymerization and filament length of FtsZ in vitro. The sequence is that of Sporulation-specific cell division protein SsgB from Kineococcus radiotolerans (strain ATCC BAA-149 / DSM 14245 / SRS30216).